Reading from the N-terminus, the 49-residue chain is Large ribosomal subunit protein bL33 (49 aa).

This sequence belongs to the bacterial ribosomal protein bL33 family.

The chain is Large ribosomal subunit protein bL33 from Lachnoclostridium phytofermentans (strain ATCC 700394 / DSM 18823 / ISDg) (Clostridium phytofermentans).